Consider the following 337-residue polypeptide: Phenylalanine--tRNA ligase alpha subunit (337 aa).

Mg(2+) is bound at residue glutamate 252.

It belongs to the class-II aminoacyl-tRNA synthetase family. Phe-tRNA synthetase alpha subunit type 1 subfamily. As to quaternary structure, tetramer of two alpha and two beta subunits. It depends on Mg(2+) as a cofactor.

It localises to the cytoplasm. It carries out the reaction tRNA(Phe) + L-phenylalanine + ATP = L-phenylalanyl-tRNA(Phe) + AMP + diphosphate + H(+). The protein is Phenylalanine--tRNA ligase alpha subunit of Francisella philomiragia subsp. philomiragia (strain ATCC 25017 / CCUG 19701 / FSC 153 / O#319-036).